The following is a 397-amino-acid chain: MGVKRVIVFDTTLRDGEQTPGVNFNSRDKLEIAYQLAKLGVDVIEAGFPAASNGDFEAVKNIADYVKGVTIAAMGRAVKEDIDRASSALKNAEKSRLHVFIATSDIHLQYKLKMTRDEVLKKAVEMVKYARGKFDEIEFSAEDASRTDWDFLVKVFSEVIDAGAHIINVPDTVGYAMPREYGELIRYIRNNVPNIDGVTISAHCHNDLGLAVANSLSAIENGATQVEVTVNGIGERAGNAAMEEVIMALNTRKDYFGLVHGINTKEIYNTSKLVSELTGIKLQPNKAIVGANAFRHQSGIHQHGVINNRLTYEIMRPEDIGVVPDTFALGKLSGRNAFELKVRQLGYNLSPGEISEAFRKFKDLADRKKTIVEEDIRFVVEETIEEFRGFREGEAWA.

A Pyruvate carboxyltransferase domain is found at 6–268 (VIVFDTTLRD…VHGINTKEIY (263 aa)). Residues aspartate 15, histidine 203, histidine 205, and asparagine 239 each contribute to the Mn(2+) site.

This sequence belongs to the alpha-IPM synthase/homocitrate synthase family. LeuA type 1 subfamily. In terms of assembly, homodimer. The cofactor is Mn(2+).

The protein resides in the cytoplasm. It carries out the reaction 3-methyl-2-oxobutanoate + acetyl-CoA + H2O = (2S)-2-isopropylmalate + CoA + H(+). Its pathway is amino-acid biosynthesis; L-leucine biosynthesis; L-leucine from 3-methyl-2-oxobutanoate: step 1/4. Functionally, catalyzes the condensation of the acetyl group of acetyl-CoA with 3-methyl-2-oxobutanoate (2-ketoisovalerate) to form 3-carboxy-3-hydroxy-4-methylpentanoate (2-isopropylmalate). The polypeptide is 2-isopropylmalate synthase 1 (Caldanaerobacter subterraneus subsp. tengcongensis (strain DSM 15242 / JCM 11007 / NBRC 100824 / MB4) (Thermoanaerobacter tengcongensis)).